A 337-amino-acid chain; its full sequence is Glycerol-3-phosphate dehydrogenase [NAD(P)+] (337 aa).

NADPH-binding residues include Ser-11, Trp-12, Arg-32, and Lys-109. Sn-glycerol 3-phosphate-binding residues include Lys-109, Gly-140, and Ser-142. Ala-144 contributes to the NADPH binding site. Residues Lys-195, Asp-248, Ser-258, Arg-259, and Asn-260 each coordinate sn-glycerol 3-phosphate. Lys-195 (proton acceptor) is an active-site residue. Arg-259 contacts NADPH. Residues Val-283 and Glu-285 each coordinate NADPH.

The protein belongs to the NAD-dependent glycerol-3-phosphate dehydrogenase family.

The protein resides in the cytoplasm. It carries out the reaction sn-glycerol 3-phosphate + NAD(+) = dihydroxyacetone phosphate + NADH + H(+). It catalyses the reaction sn-glycerol 3-phosphate + NADP(+) = dihydroxyacetone phosphate + NADPH + H(+). It participates in membrane lipid metabolism; glycerophospholipid metabolism. Functionally, catalyzes the reduction of the glycolytic intermediate dihydroxyacetone phosphate (DHAP) to sn-glycerol 3-phosphate (G3P), the key precursor for phospholipid synthesis. The chain is Glycerol-3-phosphate dehydrogenase [NAD(P)+] from Limosilactobacillus fermentum (strain NBRC 3956 / LMG 18251) (Lactobacillus fermentum).